The following is a 365-amino-acid chain: Peptide chain release factor 2 (365 aa).

Position 252 is an N5-methylglutamine (Gln252).

Belongs to the prokaryotic/mitochondrial release factor family. Methylated by PrmC. Methylation increases the termination efficiency of RF2.

It is found in the cytoplasm. Functionally, peptide chain release factor 2 directs the termination of translation in response to the peptide chain termination codons UGA and UAA. In Haemophilus influenzae (strain ATCC 51907 / DSM 11121 / KW20 / Rd), this protein is Peptide chain release factor 2 (prfB).